We begin with the raw amino-acid sequence, 164 residues long: CDP-archaeol synthase (164 aa).

A run of 4 helical transmembrane segments spans residues 3–23 (LLYF…AVLA), 51–71 (YEGF…PNLL), 77–97 (LLDA…GAFI), and 122–142 (LAVY…AVII).

Belongs to the CDP-archaeol synthase family. Requires Mg(2+) as cofactor.

The protein resides in the cell membrane. It catalyses the reaction 2,3-bis-O-(geranylgeranyl)-sn-glycerol 1-phosphate + CTP + H(+) = CDP-2,3-bis-O-(geranylgeranyl)-sn-glycerol + diphosphate. It functions in the pathway membrane lipid metabolism; glycerophospholipid metabolism. Functionally, catalyzes the formation of CDP-2,3-bis-(O-geranylgeranyl)-sn-glycerol (CDP-archaeol) from 2,3-bis-(O-geranylgeranyl)-sn-glycerol 1-phosphate (DGGGP) and CTP. This reaction is the third ether-bond-formation step in the biosynthesis of archaeal membrane lipids. The chain is CDP-archaeol synthase from Pyrobaculum islandicum (strain DSM 4184 / JCM 9189 / GEO3).